A 285-amino-acid polypeptide reads, in one-letter code: 2,3,4,5-tetrahydropyridine-2,6-dicarboxylate N-succinyltransferase (285 aa).

The substrate site is built by Arg111 and Asp148.

This sequence belongs to the transferase hexapeptide repeat family. As to quaternary structure, homotrimer.

The protein resides in the cytoplasm. It carries out the reaction (S)-2,3,4,5-tetrahydrodipicolinate + succinyl-CoA + H2O = (S)-2-succinylamino-6-oxoheptanedioate + CoA. It participates in amino-acid biosynthesis; L-lysine biosynthesis via DAP pathway; LL-2,6-diaminopimelate from (S)-tetrahydrodipicolinate (succinylase route): step 1/3. This Rhizobium rhizogenes (strain K84 / ATCC BAA-868) (Agrobacterium radiobacter) protein is 2,3,4,5-tetrahydropyridine-2,6-dicarboxylate N-succinyltransferase.